The sequence spans 400 residues: Formate-dependent phosphoribosylglycinamide formyltransferase (400 aa).

Residues 22–23 (EL) and Glu-82 contribute to the N(1)-(5-phospho-beta-D-ribosyl)glycinamide site. ATP-binding positions include Arg-114, Lys-155, 160–165 (SSGKGQ), 195–198 (EGFV), and Glu-203. Residues 119-308 (RLAAEELGLS…EFALHARALL (190 aa)) enclose the ATP-grasp domain. Glu-267 and Glu-279 together coordinate Mg(2+). N(1)-(5-phospho-beta-D-ribosyl)glycinamide is bound by residues Asp-286, Lys-356, and 363–364 (RR).

This sequence belongs to the PurK/PurT family. As to quaternary structure, homodimer.

It catalyses the reaction N(1)-(5-phospho-beta-D-ribosyl)glycinamide + formate + ATP = N(2)-formyl-N(1)-(5-phospho-beta-D-ribosyl)glycinamide + ADP + phosphate + H(+). It functions in the pathway purine metabolism; IMP biosynthesis via de novo pathway; N(2)-formyl-N(1)-(5-phospho-D-ribosyl)glycinamide from N(1)-(5-phospho-D-ribosyl)glycinamide (formate route): step 1/1. In terms of biological role, involved in the de novo purine biosynthesis. Catalyzes the transfer of formate to 5-phospho-ribosyl-glycinamide (GAR), producing 5-phospho-ribosyl-N-formylglycinamide (FGAR). Formate is provided by PurU via hydrolysis of 10-formyl-tetrahydrofolate. The polypeptide is Formate-dependent phosphoribosylglycinamide formyltransferase (Hahella chejuensis (strain KCTC 2396)).